The primary structure comprises 466 residues: Asparagine--tRNA ligase (466 aa).

Belongs to the class-II aminoacyl-tRNA synthetase family. In terms of assembly, homodimer.

It is found in the cytoplasm. It catalyses the reaction tRNA(Asn) + L-asparagine + ATP = L-asparaginyl-tRNA(Asn) + AMP + diphosphate + H(+). The chain is Asparagine--tRNA ligase from Xylella fastidiosa (strain 9a5c).